A 296-amino-acid chain; its full sequence is Bidirectional sugar transporter SWEET13 (296 aa).

Residues 1-9 (MAGLSLQHP) are Extracellular-facing. The chain crosses the membrane as a helical span at residues 10 to 30 (WAFAFGLLGNLISFTTYLAPI). In terms of domain architecture, MtN3/slv 1 spans 13 to 98 (AFGLLGNLIS…VMYLAYAPKK (86 aa)). Topologically, residues 31–45 (PTFYRIYKSKSTEGF) are cytoplasmic. The chain crosses the membrane as a helical span at residues 46–66 (QSVPYVVALFSAMLWIFYALI). The Extracellular segment spans residues 67 to 71 (KSNEA). Residues 72-92 (LLITINAAGCVIETIYIVMYL) form a helical membrane-spanning segment. The Cytoplasmic segment spans residues 93-105 (AYAPKKAKVFTTK). A helical membrane pass occupies residues 106–126 (ILLLLNVGVFGVILLLTLLLS). At 127-133 (HGEQRVV) the chain is on the extracellular side. Residues 134–154 (SLGWVCVAFSVSVFVAPLSII) form a helical membrane-spanning segment. Residues 134 to 217 (SLGWVCVAFS…MGLYVFYMNA (84 aa)) form the MtN3/slv 2 domain. The Cytoplasmic portion of the chain corresponds to 155–167 (KRVIQSRSVEYMP). The chain crosses the membrane as a helical span at residues 168–188 (FSLSLTLTLSAVVWFLYGLLI). The Extracellular segment spans residues 189-192 (KDKY). A helical transmembrane segment spans residues 193–213 (VALPNILGFTFGVVQMGLYVF). Residues 214–296 (YMNATPVAGE…PPRAVEVAAV (83 aa)) are Cytoplasmic-facing.

The protein belongs to the SWEET sugar transporter family. Forms homooligomers and/or heterooligomers.

It localises to the cell membrane. Functionally, mediates both low-affinity uptake and efflux of sugar across the plasma membrane. In terms of biological role, confers blight susceptibility. Confers TAL effector-mediated susceptibility to Xanthomonas oryzae pv. oryzae. This is Bidirectional sugar transporter SWEET13 (SWEET13) from Oryza sativa subsp. japonica (Rice).